The primary structure comprises 289 residues: MSAGIRTYLELMRYKNCLMAGFAAAIGTLIAFNILISGTSTPNFEDAFPFLDAGLVFLVVFLVSGAGNAINDYFDIKIDSINRPERPIPSGRVKAKEAFYFSYLLFALGTLIAFSINSICGSIALFNSLLLILYAKTLKGTPLLGNLSIGYLTGSVFLFGASIFGFGGIKALSVLFLLAALAITAREIVKDIEDMEGDSLEGADTLPLRIGAKKAGYLAVLTGLLAVILSPLPYFMSVLGLRYIYLVSLADLGFLAAIIQLLVRNNPTKSSKLFKIAMFFALIAFIAGV.

Helical transmembrane passes span 18-38 (LMAGFAAAIGTLIAFNILISG), 47-67 (AFPFLDAGLVFLVVFLVSGAG), 99-119 (FYFSYLLFALGTLIAFSINSI), 120-140 (CGSIALFNSLLLILYAKTLKG), 163-183 (IFGFGGIKALSVLFLLAALAI), 218-238 (LAVLTGLLAVILSPLPYFMSV), 243-263 (YIYLVSLADLGFLAAIIQLLV), and 269-289 (KSSKLFKIAMFFALIAFIAGV).

Belongs to the UbiA prenyltransferase family. DGGGP synthase subfamily. It depends on Mg(2+) as a cofactor.

The protein localises to the cell membrane. It catalyses the reaction sn-3-O-(geranylgeranyl)glycerol 1-phosphate + (2E,6E,10E)-geranylgeranyl diphosphate = 2,3-bis-O-(geranylgeranyl)-sn-glycerol 1-phosphate + diphosphate. It participates in membrane lipid metabolism; glycerophospholipid metabolism. In terms of biological role, prenyltransferase that catalyzes the transfer of the geranylgeranyl moiety of geranylgeranyl diphosphate (GGPP) to the C2 hydroxyl of (S)-3-O-geranylgeranylglyceryl phosphate (GGGP). This reaction is the second ether-bond-formation step in the biosynthesis of archaeal membrane lipids. This chain is Digeranylgeranylglyceryl phosphate synthase, found in Methanosarcina mazei (strain ATCC BAA-159 / DSM 3647 / Goe1 / Go1 / JCM 11833 / OCM 88) (Methanosarcina frisia).